We begin with the raw amino-acid sequence, 234 residues long: Sugar fermentation stimulation protein homolog (234 aa).

Belongs to the SfsA family.

This chain is Sugar fermentation stimulation protein homolog, found in Shewanella loihica (strain ATCC BAA-1088 / PV-4).